The sequence spans 440 residues: L-seryl-tRNA(Sec) selenium transferase (440 aa).

An N6-(pyridoxal phosphate)lysine modification is found at lysine 282.

The protein belongs to the SelA family. Requires pyridoxal 5'-phosphate as cofactor.

It localises to the cytoplasm. The enzyme catalyses L-seryl-tRNA(Sec) + selenophosphate + H(+) = L-selenocysteinyl-tRNA(Sec) + phosphate. Its pathway is aminoacyl-tRNA biosynthesis; selenocysteinyl-tRNA(Sec) biosynthesis; selenocysteinyl-tRNA(Sec) from L-seryl-tRNA(Sec) (bacterial route): step 1/1. In terms of biological role, converts seryl-tRNA(Sec) to selenocysteinyl-tRNA(Sec) required for selenoprotein biosynthesis. This Campylobacter jejuni (strain RM1221) protein is L-seryl-tRNA(Sec) selenium transferase.